The primary structure comprises 81 residues: YcgL domain-containing protein Tgr7_3126 (81 aa).

The YcgL domain occupies 1–81; that stretch reads MQVYVYKSRR…QMPPQNERPL (81 aa).

The sequence is that of YcgL domain-containing protein Tgr7_3126 from Thioalkalivibrio sulfidiphilus (strain HL-EbGR7).